The primary structure comprises 36 residues: U4-ctenitoxin-Pr1a (36 aa).

Disulfide bonds link Cys-3–Cys-17, Cys-10–Cys-22, and Cys-16–Cys-34.

As to expression, expressed by the venom gland.

It localises to the secreted. In terms of biological role, neurotoxin. Causes spastic paralysis and death in mice. Moderate inhibitor of L-type calcium channels (Cav1/CACNA1). This is U4-ctenitoxin-Pr1a from Phoneutria reidyi (Brazilian Amazonian armed spider).